A 547-amino-acid chain; its full sequence is ATP synthase subunit alpha (547 aa).

An ATP-binding site is contributed by 173-180 (GDRATGKT). Positions 526-547 (PEAEALADEDVEQEQIVRQKRG) are disordered. Positions 528-538 (AEALADEDVEQ) are enriched in acidic residues.

It belongs to the ATPase alpha/beta chains family. In terms of assembly, F-type ATPases have 2 components, CF(1) - the catalytic core - and CF(0) - the membrane proton channel. CF(1) has five subunits: alpha(3), beta(3), gamma(1), delta(1), epsilon(1). CF(0) has three main subunits: a(1), b(2) and c(9-12). The alpha and beta chains form an alternating ring which encloses part of the gamma chain. CF(1) is attached to CF(0) by a central stalk formed by the gamma and epsilon chains, while a peripheral stalk is formed by the delta and b chains.

It localises to the cell membrane. It carries out the reaction ATP + H2O + 4 H(+)(in) = ADP + phosphate + 5 H(+)(out). In terms of biological role, produces ATP from ADP in the presence of a proton gradient across the membrane. The alpha chain is a regulatory subunit. This is ATP synthase subunit alpha from Nocardioides sp. (strain ATCC BAA-499 / JS614).